Here is a 312-residue protein sequence, read N- to C-terminus: MDIIFYHPTFDTQWWIEALRKAIPQARVRAWKSGDNDSADYALVWHPPVEMLAGRDLKAVFALGAGVDSILSKLQAHPEMLNPSVPLFRLEDTGMGEQMQEYAVSQVLHWFRRFDDYRIQQNSSHWQPLPEYHREDFTIGILGAGVLGSKVAQSLQTWRFPLRCWSRTRKSWPGVQSFAGREELSAFLSQCRVLINLLPNTPETVGIINQQLLEKLPDGAYLLNLARGVHVVEDDLLAALDSGKVKGAMLDVFNREPLPPENPLWQHPRVTITPHVAAITRPAEAVEYISRTIAQLEKGERVCGQVDRARGY.

Arginine 227 is a catalytic residue. Histidine 275 acts as the Proton donor in catalysis.

The protein belongs to the D-isomer specific 2-hydroxyacid dehydrogenase family. GhrA subfamily.

It localises to the cytoplasm. It catalyses the reaction glycolate + NADP(+) = glyoxylate + NADPH + H(+). It carries out the reaction (R)-glycerate + NAD(+) = 3-hydroxypyruvate + NADH + H(+). The enzyme catalyses (R)-glycerate + NADP(+) = 3-hydroxypyruvate + NADPH + H(+). In terms of biological role, catalyzes the NADPH-dependent reduction of glyoxylate and hydroxypyruvate into glycolate and glycerate, respectively. The polypeptide is Glyoxylate/hydroxypyruvate reductase A (Escherichia coli (strain 55989 / EAEC)).